We begin with the raw amino-acid sequence, 252 residues long: Probable endonuclease 4 (252 aa).

Zn(2+)-binding residues include histidine 56, histidine 96, glutamate 129, aspartate 162, histidine 165, histidine 191, aspartate 204, histidine 206, and glutamate 233.

The protein belongs to the AP endonuclease 2 family. The cofactor is Zn(2+).

It carries out the reaction Endonucleolytic cleavage to 5'-phosphooligonucleotide end-products.. Endonuclease IV plays a role in DNA repair. It cleaves phosphodiester bonds at apurinic or apyrimidinic (AP) sites, generating a 3'-hydroxyl group and a 5'-terminal sugar phosphate. The polypeptide is Probable endonuclease 4 (Mycobacterium tuberculosis (strain ATCC 25177 / H37Ra)).